Consider the following 380-residue polypeptide: Actinidain (380 aa).

Residues Met-1–Ala-24 form the signal peptide. The propeptide at Phe-25–Val-126 is activation peptide. Cystine bridges form between Cys-148–Cys-191, Cys-182–Cys-224, and Cys-282–Cys-332. Residue Cys-151 is part of the active site. Cys-151 is a binding site for E64. Active-site residues include His-288 and Asn-308.

Belongs to the peptidase C1 family. In terms of tissue distribution, fruit.

The catalysed reaction is Specificity close to that of papain.. With respect to regulation, repressed by the active-site-directed cysteine protease inhibitor E64 (L-trans-epoxysuccinyl-leucylamide-(4-guanido)-butane) produced by Aspergillus japonicus. Functionally, cysteine protease responsible for the cleavage of kiwellin into kissper and KiTH. This Actinidia chinensis var. chinensis (Chinese soft-hair kiwi) protein is Actinidain.